The sequence spans 563 residues: Benzaldehyde lyase (563 aa).

It belongs to the TPP enzyme family. The cofactor is a metal cation. Thiamine diphosphate serves as cofactor.

The enzyme catalyses benzoin = 2 benzaldehyde. Its function is as follows. Cleavage of benzoin-anisoin acyloin linkage. The protein is Benzaldehyde lyase (bznB) of Pseudomonas fluorescens.